A 502-amino-acid polypeptide reads, in one-letter code: Putative F-box/FBD/LRR-repeat protein At5g22610 (502 aa).

The 47-residue stretch at 17 to 63 (EDLISKLPEVLLSQILSYLPTKDIVRTSVLSKRWKSVWLLIPGLDLD) folds into the F-box domain. LRR repeat units follow at residues 70–98 (YDTF…KLSI), 99–127 (QKNE…DVEF), 147–180 (CKTL…CLEE), 181–206 (NVYS…TIVK), 208–228 (DDNV…SVGY), 238–263 (YYYD…TFNN), and 344–373 (SVWL…VLET). Positions 384–435 (VERRVSSVPECLLSSLEFVEIKNRISVDDGALEVARYFVENSVNLQKVVLRL) constitute an FBD domain.

The chain is Putative F-box/FBD/LRR-repeat protein At5g22610 from Arabidopsis thaliana (Mouse-ear cress).